Reading from the N-terminus, the 515-residue chain is Thioredoxin domain-containing protein 2 (515 aa).

Positions 1 to 23 (MTLNNGGKANERGSNENPLQALS) are disordered. Phosphoserine occurs at positions 14 and 39. The interval 51–390 (TLHMSTEESE…NTIKSSEEDV (340 aa)) is disordered. 2 stretches are compositionally biased toward polar residues: residues 61 to 75 (FPQQVSSTPMFSENT) and 85 to 136 (KPSS…TNST). 21 repeat units span residues 92–106 (QLKQENISKSSGYSK), 107–121 (QTNYSNTPKSLAKTT), 122–136 (HPKQGSTLKPATNST), 137–151 (HYREDDIPKSSEDII), 152–166 (QPKKGDRPKSSEDII), 167–181 (QSKKEDRPKSSEDII), 182–196 (QSKKEDRPKSSEDII), 197–211 (QSKKEDRPKSSEDII), 212–226 (QSKKEDRPKSSEDII), 227–241 (QPKKEDRPKSSEDSV), 242–256 (PSKKGDRPKSSEDSV), 257–271 (QPKKEDRPKSSEDSV), 272–286 (QSKEGEVHKPLKDSI), 287–301 (QSKETKVPKSPQDSI), 302–316 (QSKEDKTHRPLKDSV), 317–331 (QSKESEEPKSSHESI), 332–346 (QSKEDKIHKPLKDSI), 347–362 (PSKEGDIPKSPEDTIQ), 363–375 (SQEEITASEEDTI), 376–390 (QSQEGNTIKSSEEDV), and 391–405 (QLSESKLLGLGAEIE). The tract at residues 92-405 (QLKQENISKS…KLLGLGAEIE (314 aa)) is 21 X 15 AA approximate tandem repeat of Q-P-K-X-G-D-I-P-K-S-[PS]-E-[KE]-X-I. Basic and acidic residues-rich tracts occupy residues 137-293 (HYRE…ETKV) and 302-358 (QSKE…KSPE). S146 is subject to Phosphoserine. Residues 375–384 (IQSQEGNTIK) are compositionally biased toward polar residues. The 118-residue stretch at 398-515 (LGLGAEIETL…KLERSISELK (118 aa)) folds into the Thioredoxin domain. Cysteines 442 and 445 form a disulfide.

As to expression, testis-specific. Strongly expressed in the testicular seminiferous tubules, mostly in the round spermatids.

The protein resides in the cytoplasm. Probably plays a regulatory role in sperm development. May participate in regulation of fibrous sheath (FS) assembly by supporting the formation of disulfide bonds during sperm tail morphogenesis. May also be required to rectify incorrect disulfide pairing and generate suitable pairs between the FS constituents. Can reduce disulfide bonds in vitro in the presence of NADP and thioredoxin reductase. The polypeptide is Thioredoxin domain-containing protein 2 (Txndc2) (Mus musculus (Mouse)).